Here is a 274-residue protein sequence, read N- to C-terminus: NADPH-dependent 7-cyano-7-deazaguanine reductase (274 aa).

A substrate-binding site is contributed by 80-82 (VES). An NADPH-binding site is contributed by 82–83 (SK). The Thioimide intermediate role is filled by C181. The active-site Proton donor is D188. Substrate is bound at residue 220–221 (HE). An NADPH-binding site is contributed by 249–250 (RG).

This sequence belongs to the GTP cyclohydrolase I family. QueF type 2 subfamily. Homodimer.

It is found in the cytoplasm. The enzyme catalyses 7-aminomethyl-7-carbaguanine + 2 NADP(+) = 7-cyano-7-deazaguanine + 2 NADPH + 3 H(+). The protein operates within tRNA modification; tRNA-queuosine biosynthesis. Its function is as follows. Catalyzes the NADPH-dependent reduction of 7-cyano-7-deazaguanine (preQ0) to 7-aminomethyl-7-deazaguanine (preQ1). The polypeptide is NADPH-dependent 7-cyano-7-deazaguanine reductase (Burkholderia ambifaria (strain ATCC BAA-244 / DSM 16087 / CCUG 44356 / LMG 19182 / AMMD) (Burkholderia cepacia (strain AMMD))).